Consider the following 270-residue polypeptide: DNA repair protein RecO (270 aa).

The tract at residues 202–221 (PELPPSTIDADTDNPSQPPS) is disordered.

It belongs to the RecO family.

In terms of biological role, involved in DNA repair and RecF pathway recombination. The chain is DNA repair protein RecO from Rhodopirellula baltica (strain DSM 10527 / NCIMB 13988 / SH1).